Here is a 795-residue protein sequence, read N- to C-terminus: MPVTKKSQILVVRGQVIFPFVPFSLDVGRPRSRKIIKALKTLKTKRLVLVTQKFTGEQNPEFNDIYHVGTLCEIDEIVDVPGVDSKTVDYRIKGRGLQRVLIEKFSDADINEVSYQLLNSTVKDEANVDRFLQRIFPEKEEIEQLMEGAEKFLELENISKTVNVPKGLKQLDIITFKLANLVPNTESIKQAILEENEIANRLEKIIQAGIEDLQKIQDYGRSKNKETEFDKLDSKITRKINEQLSRQQRDFYLREKLRIIREEIGISSKKEDEVASIRKKLDENPYPEAIKKRILSELEHYENSSSSSQESTLTKTYIDTLLNLPWWQKSKDNSDVKNLIKTLDKNHTGLDKVKERIVEYLAVQLRTQKNKGPIMCLVGPPGVGKSSLAKSIAEALDKKFVKISLGGVHDESEIRGHRKTYLGSMPGRILKGMTRAKVINPLFLLDEIDKMTSSNQGYPSGALLEVLDPELNNKFSDNYVEEDYDLSKVMFIATANYIEDIPEALLDRMEIIELTSYTEQEKIEIAKNHLIKRCLEDADLNSEELKFTDEAISYIIKFYTREAGVRQLERLIQQVVRKYIVAMQKDGIKQETIDVNAVKKYLKKEIFDHTMRDEVSLPGIVNGMAYTPTGGDLLPIEVTHVAGKGELILTGNLKQTMRESANVALGYVKANAERFNINPSLFKKIDINIHVPGGGIPKDGPSAGAALVTAIISSLTGKKVDPTVAMTGEITLRGKVLVIGGVKEKTISAYRGGVTTIFMPEKNERYLDEVPKEIVDKLNIIFVKEYSDIYNKLFS.

The 207-residue stretch at 7-213 (SQILVVRGQV…KIIQAGIEDL (207 aa)) folds into the Lon N-terminal domain. Residue 379-386 (GPPGVGKS) coordinates ATP. Positions 615–795 (VSLPGIVNGM…YSDIYNKLFS (181 aa)) constitute a Lon proteolytic domain. Active-site residues include serine 702 and lysine 745.

This sequence belongs to the peptidase S16 family. In terms of assembly, homohexamer. Organized in a ring with a central cavity.

The protein resides in the cytoplasm. It carries out the reaction Hydrolysis of proteins in presence of ATP.. ATP-dependent serine protease that mediates the selective degradation of mutant and abnormal proteins as well as certain short-lived regulatory proteins. Required for cellular homeostasis and for survival from DNA damage and developmental changes induced by stress. Degrades polypeptides processively to yield small peptide fragments that are 5 to 10 amino acids long. Binds to DNA in a double-stranded, site-specific manner. The polypeptide is Lon protease (Mycoplasma genitalium (strain ATCC 33530 / DSM 19775 / NCTC 10195 / G37) (Mycoplasmoides genitalium)).